The chain runs to 151 residues: UPF0208 membrane protein YE1335 (151 aa).

2 helical membrane-spanning segments follow: residues 46–66 (FGIR…IALG) and 69–89 (LGPA…GLWW).

It belongs to the UPF0208 family.

The protein resides in the cell inner membrane. The chain is UPF0208 membrane protein YE1335 from Yersinia enterocolitica serotype O:8 / biotype 1B (strain NCTC 13174 / 8081).